Consider the following 177-residue polypeptide: Large ribosomal subunit protein uL6 (177 aa).

Belongs to the universal ribosomal protein uL6 family. As to quaternary structure, part of the 50S ribosomal subunit.

This protein binds to the 23S rRNA, and is important in its secondary structure. It is located near the subunit interface in the base of the L7/L12 stalk, and near the tRNA binding site of the peptidyltransferase center. The protein is Large ribosomal subunit protein uL6 of Acinetobacter baumannii (strain SDF).